Here is a 519-residue protein sequence, read N- to C-terminus: Cytochrome P450 CYP99A1 (519 aa).

Residue C453 participates in heme binding.

The protein belongs to the cytochrome P450 family. Heme serves as cofactor.

The protein resides in the membrane. In Sorghum bicolor (Sorghum), this protein is Cytochrome P450 CYP99A1 (CYP99A1).